Here is a 110-residue protein sequence, read N- to C-terminus: Carboxysome shell protein CsoS1B (110 aa).

Positions 8-93 constitute a BMC domain; that stretch reads ALGMIETRGL…VHSEVEIILP (86 aa).

Belongs to the bacterial microcompartments protein family. CsoS1 subfamily. As to quaternary structure, homohexamer with a small central pore. Interacts with the N-terminus (residues 1-136) of RuBisCO (CbbL).

The protein resides in the carboxysome. One of shell proteins of the carboxysome, a polyhedral inclusion where RuBisCO (ribulose bisphosphate carboxylase, ccbL-ccbS) is sequestered. Assembles into hexamers which make sheets that form the facets of the polyhedral carboxysome. The shell probably limits the diffusion of CO(2) into and out of the carboxysome. There are estimated to be 540 CsoS1B proteins per carboxysome. In terms of biological role, unlike beta-carboxysomes, alpha-carboxysomes (Cb) can form without cargo protein. CsoS2 is essential for Cb formation and is also capable of targeting foreign proteins to the Cb. The Cb shell assembles with the aid of CsoS2; CsoS1A, CsoS1B and CsoS1C form the majority of the shell while CsoS4A and CsoS4B form vertices. CsoS1D forms pseudohexamers that probably control metabolite flux into and out of the shell. The polypeptide is Carboxysome shell protein CsoS1B (Halothiobacillus neapolitanus (strain ATCC 23641 / c2) (Thiobacillus neapolitanus)).